Reading from the N-terminus, the 1391-residue chain is ESX-5 secretion system protein EccC5 (1391 aa).

Transmembrane regions (helical) follow at residues 38-58 and 65-85; these read WLIV…AMVF and FGGI…MMMF. 3 FtsK domains span residues 476–678, 858–1052, and 1161–1354; these read GELL…GAAQ, QPPW…EDAK, and LAPV…DPDE. ATP-binding positions include 499–506, 876–883, and 1178–1185; these read GTTGSGKS, GAGGSGKT, and GRRECGRT.

In terms of assembly, part of the ESX-5 / type VII secretion system (T7SS), which is composed of cytosolic and membrane components. The ESX-5 membrane complex is composed of EccB5, EccC5, EccD5 and EccE5.

It localises to the cell inner membrane. Its function is as follows. Part of the ESX-5 specialized secretion system, which is responsible for the secretion of EsxN and a number of PE_PGRS and PPE proteins, including PPE41. The protein is ESX-5 secretion system protein EccC5 of Mycobacterium tuberculosis (strain CDC 1551 / Oshkosh).